A 251-amino-acid polypeptide reads, in one-letter code: MIKVSVVGAKGRMGSHVVEAVNKAEDTQLALALDADDDLTQVTTDNTDVVVEFTVPSVSLNNVLTLIGQGVDVVVGTTGWTDEKLTQVKSAIANGPKPETQKVFIAPNFAISAVLADYFATKAARYFESAEVIELHHPTKVDAPSGTAIHTAHGIAEARKAAGLAPVPDATETDGGSRGQVVDGIHVHAVRLRGLNAHEEVLFGNAGEQLTIRADSFDRTSFMPGVLLAVRKLAGDAPAGLTIGLDHFLDL.

NAD(+)-binding positions include 8-13, 76-78, and 106-109; these read GAKGRM, GTT, and APNF. Histidine 136 functions as the Proton donor/acceptor in the catalytic mechanism. Histidine 137 serves as a coordination point for (S)-2,3,4,5-tetrahydrodipicolinate. The active-site Proton donor is the lysine 140. 146 to 147 contributes to the (S)-2,3,4,5-tetrahydrodipicolinate binding site; sequence GT.

Belongs to the DapB family.

The protein localises to the cytoplasm. It catalyses the reaction (S)-2,3,4,5-tetrahydrodipicolinate + NAD(+) + H2O = (2S,4S)-4-hydroxy-2,3,4,5-tetrahydrodipicolinate + NADH + H(+). The catalysed reaction is (S)-2,3,4,5-tetrahydrodipicolinate + NADP(+) + H2O = (2S,4S)-4-hydroxy-2,3,4,5-tetrahydrodipicolinate + NADPH + H(+). The protein operates within amino-acid biosynthesis; L-lysine biosynthesis via DAP pathway; (S)-tetrahydrodipicolinate from L-aspartate: step 4/4. Functionally, catalyzes the conversion of 4-hydroxy-tetrahydrodipicolinate (HTPA) to tetrahydrodipicolinate. The protein is 4-hydroxy-tetrahydrodipicolinate reductase of Bifidobacterium longum subsp. infantis (strain ATCC 15697 / DSM 20088 / JCM 1222 / NCTC 11817 / S12).